Consider the following 100-residue polypeptide: Urease subunit gamma (100 aa).

This sequence belongs to the urease gamma subunit family. Heterotrimer of UreA (gamma), UreB (beta) and UreC (alpha) subunits. Three heterotrimers associate to form the active enzyme.

Its subcellular location is the cytoplasm. It carries out the reaction urea + 2 H2O + H(+) = hydrogencarbonate + 2 NH4(+). It participates in nitrogen metabolism; urea degradation; CO(2) and NH(3) from urea (urease route): step 1/1. The chain is Urease subunit gamma from Burkholderia orbicola (strain MC0-3).